The following is a 26-amino-acid chain: Oxyopinin-3a (26 aa).

Expressed by the venom gland.

The protein localises to the secreted. May have cytolytic and antimicrobial activity. This chain is Oxyopinin-3a, found in Oxyopes takobius (Lynx spider).